The primary structure comprises 361 residues: Beta-hexosaminidase (361 aa).

Substrate is bound by residues D69, R77, R144, and 174–175 (KH). The Proton donor/acceptor role is filled by H187. Catalysis depends on D258, which acts as the Nucleophile.

Belongs to the glycosyl hydrolase 3 family. NagZ subfamily.

The protein localises to the cytoplasm. It carries out the reaction Hydrolysis of terminal non-reducing N-acetyl-D-hexosamine residues in N-acetyl-beta-D-hexosaminides.. Its pathway is cell wall biogenesis; peptidoglycan recycling. Plays a role in peptidoglycan recycling by cleaving the terminal beta-1,4-linked N-acetylglucosamine (GlcNAc) from peptide-linked peptidoglycan fragments, giving rise to free GlcNAc, anhydro-N-acetylmuramic acid and anhydro-N-acetylmuramic acid-linked peptides. The polypeptide is Beta-hexosaminidase (Neisseria meningitidis serogroup B (strain ATCC BAA-335 / MC58)).